Here is a 419-residue protein sequence, read N- to C-terminus: D-galactonate dehydratase family member SEN1436 (419 aa).

Residues Gln45 and His129 each contribute to the substrate site. Tyr160 (proton donor/acceptor) is an active-site residue. Residue Asp225 coordinates Mg(2+). Residue His227 is the Proton donor/acceptor of the active site. 2 residues coordinate Mg(2+): Glu251 and Glu277. Substrate contacts are provided by Glu277, Arg298, His327, Asp331, and Glu354.

The protein belongs to the mandelate racemase/muconate lactonizing enzyme family. GalD subfamily. In terms of assembly, homotetramer. Mg(2+) serves as cofactor.

The enzyme catalyses D-gluconate = 2-dehydro-3-deoxy-D-gluconate + H2O. In terms of biological role, has low D-gluconate dehydratase activity (in vitro), suggesting that it has no significant role in D-gluconate degradation in vivo. Has no detectable activity with a panel of 70 other acid sugars (in vitro). The polypeptide is D-galactonate dehydratase family member SEN1436 (Salmonella enteritidis PT4 (strain P125109)).